The following is a 148-amino-acid chain: Large ribosomal subunit protein bL9 (148 aa).

Belongs to the bacterial ribosomal protein bL9 family.

Binds to the 23S rRNA. The polypeptide is Large ribosomal subunit protein bL9 (Hydrogenobaculum sp. (strain Y04AAS1)).